The following is a 156-amino-acid chain: CRIB domain-containing protein RIC10 (156 aa).

Residues 30 to 43 form the CRIB domain; it reads IGFPTDVKHVAHIG. Polar residues predominate over residues 68–77; that stretch reads RPSSFSNARP. A disordered region spans residues 68–156; the sequence is RPSSFSNARP…SYKSTVSRLI (89 aa). A compositionally biased stretch (low complexity) spans 78 to 96; that stretch reads STSFFTSSSSTDFDQGSSQ. Over residues 117-128 the composition is skewed to basic residues; sequence NNKKKSSRRKKS. Positions 129 to 156 are enriched in low complexity; it reads SSSSSSPKSSRSSVLSKSSYKSTVSRLI.

As to expression, expressed in roots, leaves, flowers and pollen.

The protein localises to the cytoplasm. Functionally, functions as a downstream effector of Rho-related GTP binding proteins of the 'Rho of Plants' (ROPs) family. Participates in the propagation of ROP GTPase signals in specific cellular responses. Is involved in pollen tube growth regulation. In Arabidopsis thaliana (Mouse-ear cress), this protein is CRIB domain-containing protein RIC10 (RIC10).